Consider the following 445-residue polypeptide: 3-phosphoshikimate 1-carboxyvinyltransferase (445 aa).

3-phosphoshikimate contacts are provided by K21, S22, and R26. A phosphoenolpyruvate-binding site is contributed by K21. Phosphoenolpyruvate contacts are provided by G92 and R120. Residues S165, Q166, D307, and K334 each contribute to the 3-phosphoshikimate site. Q166 contributes to the phosphoenolpyruvate binding site. The Proton acceptor role is filled by D307. Residues R338, R379, and K405 each contribute to the phosphoenolpyruvate site.

It belongs to the EPSP synthase family. In terms of assembly, monomer.

It localises to the cytoplasm. The catalysed reaction is 3-phosphoshikimate + phosphoenolpyruvate = 5-O-(1-carboxyvinyl)-3-phosphoshikimate + phosphate. It participates in metabolic intermediate biosynthesis; chorismate biosynthesis; chorismate from D-erythrose 4-phosphate and phosphoenolpyruvate: step 6/7. Catalyzes the transfer of the enolpyruvyl moiety of phosphoenolpyruvate (PEP) to the 5-hydroxyl of shikimate-3-phosphate (S3P) to produce enolpyruvyl shikimate-3-phosphate and inorganic phosphate. The sequence is that of 3-phosphoshikimate 1-carboxyvinyltransferase from Chlamydia felis (strain Fe/C-56) (Chlamydophila felis).